A 1139-amino-acid chain; its full sequence is MAATSPHLTSIPQAVRVAASIDPSIDPGLKQQAIDYLTKVKQLSEETWQLYLQGAGAPGPSTTGRDGKEKLETDMRMFCLQVVDTVLIQKPEVMGADAVQGMYEAIVEFIQVEYIGGSCEGGQGFLRNKLAFTISQLFLRAFPSHIPTFLHPFFALLSPPTSSPPNLHPQLLTIRLLLEIAQEIHDTTLKTARIMTKERQERDGVVRDVIRSSGDDKTAVQGMLGIIEKGLEQMNSGNSSDKWAEAVDATLKTLSAWIPWIDLGVALNPTTLPFYHRLLHQPILSFRTATAGIYRTLVAKGIQDPSSRLQVLRVLAPVAVIDPLETETRGGKSEEVATFRASLGVVLSAYGVALIGISDNTEVAEQLRNEAEEMMNPALPLLLRFLSDRQYEVPLSVSPFVSDLLRIYKRMYKPPNPSTKAGQAPSPPSTLPQLSPERRQFLASMLDILIRQLAWPEDTEWEAPGNEDELDEDIAAFKNFRGSCRSFIESIAQIDKSLHTEVVARIVIATLDAYASGGGAAAVPWQQAELAMHLVYTFGEVSKNSTRAAFYELPPEMATKAARNKLRAAQGSGRTTPSSSDNVDLGPSSNNDRLEYEQFPLSPLGQLLTRCMTSGISSYPHPSVTLQYFEIIVRYIEFWKAKPETLPGLFEALLDGQGIHNSDEGVRRRCFYLFSKLCKDCRNDTVEGMVSPILDSMRDMMVINAELPPTDTPDEDPLIKATTGKSYVADQLYLFEASGNLVYLTKADPAKQMALLEAVAGPLLSGLGSGVERARVDENDLQAVLQVHHHLMALGHFAKGFPIVPDKLVELLPYTGPFKQMAEALLQAIEILKRRRVVRDAARFAFSQFANAIGTPVAELVPRFVSAVVTEFEPSELVDFLLFLQLLMHRLQGSTFETMDMLLLPLLSRIFTVLQQPVTGTDEAQVHARLKDAYLAFFTSLMNENLDGIFITDRNKPEFENVLTTLFNLTQDYSDGASQRLAFGFFSRSVIAWGTSPEAAARPSVFAESAMASQSKMVSGGGTAQPNAHAVTQEQRAKQCLPGYENFIYQRLLPAAFEVPANSQFNIRGGQLIVHEAAVLVRNTVQARGQEAIDFMLSDLLRRLNCPSDIANQLIASLTTQQAKDFKKTFFDFIKAMRG.

Residues 562–589 (ARNKLRAAQGSGRTTPSSSDNVDLGPSS) are disordered. Polar residues predominate over residues 572–589 (SGRTTPSSSDNVDLGPSS).

It belongs to the exportin family.

It localises to the nucleus. The protein localises to the cytoplasm. In terms of biological role, tRNA nucleus export receptor which facilitates tRNA translocation across the nuclear pore complex. Involved in pre-tRNA splicing, probably by affecting the interaction of pre-tRNA with splicing endonuclease. This is Exportin-T (LOS1) from Cryptococcus neoformans var. neoformans serotype D (strain B-3501A) (Filobasidiella neoformans).